The following is a 315-amino-acid chain: ATP synthase gamma chain (315 aa).

It belongs to the ATPase gamma chain family. F-type ATPases have 2 components, CF(1) - the catalytic core - and CF(0) - the membrane proton channel. CF(1) has five subunits: alpha(3), beta(3), gamma(1), delta(1), epsilon(1). CF(0) has three main subunits: a, b and c.

Its subcellular location is the cellular thylakoid membrane. In terms of biological role, produces ATP from ADP in the presence of a proton gradient across the membrane. The gamma chain is believed to be important in regulating ATPase activity and the flow of protons through the CF(0) complex. The protein is ATP synthase gamma chain of Nostoc punctiforme (strain ATCC 29133 / PCC 73102).